The chain runs to 48 residues: Disintegrin accutin (48 aa).

At Q1 the chain carries Pyrrolidone carboxylic acid. A Disintegrin domain is found at 1–48; that stretch reads QGAQCTAGPCCWPCKFLKEGTICRRARGDDLDDYCNGISADCPRNPYY. Cystine bridges form between C5-C11, C10-C35, and C23-C42. A Cell attachment site motif is present at residues 27–29; the sequence is RGD.

Belongs to the venom metalloproteinase (M12B) family. P-II subfamily. P-IIa sub-subfamily. Monomer (disintegrin). As to expression, expressed by the venom gland.

The protein resides in the secreted. Its function is as follows. Inhibit human platelet aggregation induced by ADP, collagen, thrombin or the thromboxane analog U46619 in platelet suspension with IC(50) values of 66-267 nM. Acts by inhibiting fibrinogen interaction with platelet receptors GPIIb/GPIIIa (ITGA2B/ITGB3). It also inhibits angiogenesis in vivo and in vitro by blocking integrin alpha-V/beta-3 (ITGAV/ITGB3) of endothelial cells and by inducing apoptosis. This Deinagkistrodon acutus (Hundred-pace snake) protein is Disintegrin accutin.